We begin with the raw amino-acid sequence, 47 residues long: Delta-actitoxin-Ael1b (47 aa).

Cystine bridges form between cysteine 4-cysteine 44, cysteine 6-cysteine 34, and cysteine 27-cysteine 45.

The protein belongs to the sea anemone sodium channel inhibitory toxin family. Type I subfamily.

It localises to the secreted. The protein localises to the nematocyst. Functionally, produces a positive inotropic effect in mammalian heart muscle. Modifies current passing through the fast sodium channel (Nav) in neuroblastoma cells, leading to delayed and incomplete inactivation. Paralyzes the shore crab (C.maenas) by tetanic contractions after intramuscular injection. The chain is Delta-actitoxin-Ael1b from Anthopleura elegantissima (Green aggregating anemone).